The chain runs to 381 residues: UDP-4-amino-4-deoxy-L-arabinose--oxoglutarate aminotransferase (381 aa).

Lysine 182 carries the N6-(pyridoxal phosphate)lysine modification.

This sequence belongs to the DegT/DnrJ/EryC1 family. ArnB subfamily. Homodimer. Requires pyridoxal 5'-phosphate as cofactor.

The catalysed reaction is UDP-4-amino-4-deoxy-beta-L-arabinose + 2-oxoglutarate = UDP-beta-L-threo-pentopyranos-4-ulose + L-glutamate. Its pathway is nucleotide-sugar biosynthesis; UDP-4-deoxy-4-formamido-beta-L-arabinose biosynthesis; UDP-4-deoxy-4-formamido-beta-L-arabinose from UDP-alpha-D-glucuronate: step 2/3. The protein operates within bacterial outer membrane biogenesis; lipopolysaccharide biosynthesis. Catalyzes the conversion of UDP-4-keto-arabinose (UDP-Ara4O) to UDP-4-amino-4-deoxy-L-arabinose (UDP-L-Ara4N). The modified arabinose is attached to lipid A and is required for resistance to polymyxin and cationic antimicrobial peptides. This is UDP-4-amino-4-deoxy-L-arabinose--oxoglutarate aminotransferase from Photorhabdus laumondii subsp. laumondii (strain DSM 15139 / CIP 105565 / TT01) (Photorhabdus luminescens subsp. laumondii).